A 187-amino-acid chain; its full sequence is Calcium and integrin-binding family member 2 (187 aa).

EF-hand domains are found at residues 66 to 101 (RENPFKERIVEAFSEDGEGNLTFNDFVDMFSVLCES), 103 to 138 (PRELKANYAFKIYDFNTDNFICKEDLEMTLARLTKS), and 144 to 179 (EVVLVCDKVIEEADLDGDGKLGFADFEDMIAKAPDF). 9 residues coordinate Ca(2+): D116, N118, D120, D127, D157, D159, D161, K163, and D168.

In terms of assembly, monomer. Homodimer. Interacts with WHRN and MYO7A. Interacts with ITGA2B (via C-terminus cytoplasmic tail region); this interaction is stabilized/increased in a calcium and magnesium-dependent manner. Interacts with ITGA7 (via C-terminus cytoplasmic tail region); this interaction is stabilized/increased in a calcium and magnesium-dependent manner. Interacts with TMC1. Interacts with TMC2. Interacts with PIEZO1. Expressed in inner and outer segments of photoreceptor cells, as well as in the pigmented epithelium. Also observed in the inner and outer plexiform layers and in the ganglion cell layer (at protein level). Expressed in sensory hair cell stereocilia, with expression mainly at the basal body of the kinocilium and in the hair bundle stereocilia; and the apical surface of hair cells (at protein level). Located in the tip region of the stereocilia and at the apical surface of hair cells around the cuticular plate (at protein level). Not expressed in the hair bundles of the vestibular hair cells. Strongly expressed in skeletal muscles, brain, kidney and liver. Expressed in the skeletal muscle, retina and cochlea. Expressed in megakaryocytes and endothelial cells. Expressed in heart, spleen, lung, and inner ear. In the inner ear, expressed in the vestibule, basilar membrane and spiral ganglion cells. Expressed in the supporting cells in both the organ of Corti and the vestibular sensory epithelia.

The protein resides in the cytoplasm. The protein localises to the cell projection. Its subcellular location is the stereocilium. It is found in the photoreceptor inner segment. It localises to the cilium. The protein resides in the photoreceptor outer segment. The protein localises to the cell membrane. Its subcellular location is the sarcolemma. Functionally, calcium- and integrin-binding protein that plays a role in intracellular calcium homeostasis. Acts as an auxiliary subunit of the sensory mechanoelectrical transduction (MET) channel in hair cells. Essential for mechanoelectrical transduction (MET) currents in auditory hair cells and thereby required for hearing. Regulates the function of hair cell mechanotransduction by controlling the distribution of transmembrane channel-like proteins TMC1 and TMC2, and by regulating the function of the MET channels in hair cells. Required for the maintenance of auditory hair cell stereocilia bundle morphology and function and for hair-cell survival in the cochlea. Critical for proper photoreceptor cell maintenance and function. Plays a role in intracellular calcium homeostasis by decreasing ATP-induced calcium release. Seems to be dispensable for vestibular functions. This Mus musculus (Mouse) protein is Calcium and integrin-binding family member 2 (Cib2).